We begin with the raw amino-acid sequence, 1559 residues long: MTQKTIQQVPRQGLELLASTQDLAQLCYIYGEPAEGEDSTADESIINTPQCSTIPEVAVEPEVQPIPDTPLTAIFIIRALVARKLRRSETEIDPSRSIKELCGGKSTLQNELIGELGNEFQTSLPDRAEDVSLADLDAALGEVSLGPTSVSLLQRVFTAKMPARMTVSNVRERLAEIWGLGFHRQTAVLVAALAAEPHSRLTSLEAAYQYWDGLTEAYGQSLGLFLRKAISQQAARSDDQGAQAIAPADSLGSKDLARKQYEALREYLGIRTPTTKQDGLDLADLQQKLDCWTAEFSDDFLSQISRRFDARKTRWYRDWWNSARQELLTICQNSNVQWTDKMREHFVQRAEEGLVEIARAHSLAKPLVPDLIQAISLPPVVRLGRLATMMPRTVVTLKGEIQCEEHEREPSCFVEFFSSWIQANNIRCTIQSNGEDLTSVFINSLVHASQQGVSFANHTYLITGAGPGSIGQHIVRRLLTGGARVIVTTSREPLPAAAFFKELYSKCGNRGSQLHLVPFNQASVVDCERLIGYIYDDLGLDLDAILPFAATSQVGAEIDGLDASNEAAFRLMLVNVLRLVGFVVSQKRRRGISCRPTQVVLPLSPNHGILGGDGLYAESKRGLETLIQRFHSESWKEELSICGVSIGWTRSTGLMAANDLVAETAEKQGRVLTFSVDEMGDLISLLLTPQLATRCEDAPVMADFSGNLSCWRDASAQLAAARASLRERADTARALAQEDEREYRCRRAGSTQEPVDQRVSLHLGFPSLPEYDPLLHPDLVPADAVVVVGFAELGPWGSARIRWEMESRGCLSPAGYVETAWLMNLIRHVDNVNYVGWVDGEDGKPVADADIPKRYGERILSNAGIRSLPSDNREVFQEIVLEQDLPSFETTRENAEALQQRHGDMVQVSTLKNGLCLVQLQHGATIRVPKSIMSPPGVAGQLPTGWSPERYGIPAEIVQQVDPVALVLLCCVAEAFYSAGISDPMEIFEHIHLSELGNFVGSSMGGVVNTRALYHDVCLDKDVQSDALQETYLNTAPAWVNMLYLGAAGPIKTPVGACATALESVDSAVESIKAGQTKICLVGGYDDLQPEESAGFARMKATVSVRDEQARGREPGEMSRPTAASRSGFVESQGCGVQLLCRGDVALAMGLPIYGIIAGTGMASDGIGRSVPAPGQGILTFAQEDAQNPAPIRTALARWGLGIDDITVASLHATSTPANDTNEPLVIQREMTHLGRTSGRPLWAICQKFVTGHPKAPAAAWMLNGCLQVLDTGLVPGNRNADDVDPALRSFSHLCFPIRSIQTDGIKAFLLNSCGFGQKEAQLVGVHPRYFLGLLSEPEFEEYRTRRQLRIAGAERAYISAMMTNSIVCVQSHPPFGPAEMHSILLDPSARICLDSSTNSYRVTKASTPVYTGFQRPHDKREDPRPSTIGVDTVTLSSFNAHENAIFLQRNYTERERQSLQLQSHRSFRSAVASGWCAKEAVFKCLQTVSKGAGAAMSEIEIVRVQGAPSVLHGDALAAAQKAGLDNIQLSLSYGDDCVVAVALGVRKWCLWPLASIIR.

The Carrier domain maps to 68 to 147; the sequence is DTPLTAIFII…AALGEVSLGP (80 aa). At S106 the chain carries O-(pantetheine 4'-phosphoryl)serine. Residues 457-693 form a ketoreductase (KR) domain region; it reads NHTYLITGAG…SLLLTPQLAT (237 aa). The Ketosynthase family 3 (KS3) domain maps to 873–1327; sequence REVFQEIVLE…QKEAQLVGVH (455 aa). The For beta-ketoacyl synthase activity role is filled by C1058. Over residues 1105–1117 the composition is skewed to basic and acidic residues; it reads VRDEQARGREPGE. The interval 1105–1125 is disordered; that stretch reads VRDEQARGREPGEMSRPTAAS. Catalysis depends on for beta-ketoacyl synthase activity residues H1212 and H1253. D1432 contributes to the Mg(2+) binding site. Acetyl-CoA contacts are provided by residues 1432–1434, 1480–1490, 1504–1506, and 1532–1534; these read DTV, EAVFKCLQTVS, RVQ, and LSY. Position 1533 (S1533) interacts with Mg(2+).

The protein belongs to the thiolase-like superfamily. Fungal fatty acid synthetase subunit alpha family. In terms of assembly, [Alpha(6)beta(6)] hexamers of two multifunctional subunits (alpha and beta).

The catalysed reaction is acetyl-CoA + n malonyl-CoA + 2n NADPH + 4n H(+) = a long-chain-acyl-CoA + n CoA + n CO2 + 2n NADP(+).. It catalyses the reaction a fatty acyl-[ACP] + malonyl-[ACP] + H(+) = a 3-oxoacyl-[ACP] + holo-[ACP] + CO2. It carries out the reaction a (3R)-hydroxyacyl-[ACP] + NADP(+) = a 3-oxoacyl-[ACP] + NADPH + H(+). Its pathway is mycotoxin biosynthesis; sterigmatocystin biosynthesis. In terms of biological role, fatty acid synthase alpha subunit; part of the gene cluster that mediates the biosynthesis of sterigmatocystin (ST), a polyketide-derived furanocoumarin which is part of the most toxic and carcinogenic compounds among the known mycotoxins. The first step in the biosynthesis of sterigmatocystin is the production of hexanoate by the fatty acid synthase (FAS) units stcJ and stcK. The polyketide backbone is assembled by the non-reducing polyketide synthase stcA by condensation of the starter hexanoyl-CoA and 7 malonyl-CoA extender units followed by cyclization and release of norsolorinic acid. Norsolorinic acid is the first stable intermediate in the biosynthesis of sterigmatocystin and is converted into averantin (AVN) by the ketoreductase stcE which reduces the hexanoate ketone to an alcohol. Averantin is then oxidized into 5'-hydroxyaverantin (HAVN) by the cytochrome P450 monooxygenase stcF. 5'-hydroxyaverantin is further converted to 5'-oxyaverantin (OAVN) by the 5'-hydroxyaverantin dehydrogenase stcG. The next step is the conversion of OAVN into averufin (AVF) which is catalyzed by a yet to be identified enzyme. The cytochrome P450 monooxygenase stcB and the flavin-binding monooxygenase stcW are both required for the conversion of averufin to 1-hydroxyversicolorone. The esterase stcI probably catalyzes the formation of versiconal hemiacetal acetate from 1-hydroxyversicolorone. The oxydoreductase stcN then probably catalyzes the biosynthetic step from versiconal to versicolorin B (VERB). The next step is performed by the versicolorin B desaturase stcL to produce versicolorin A (VERA). The ketoreductase stcU and the cytochrome P450 monooxygenase stcS are involved in the conversion of versicolorin A to demethylsterigmatocystin. The Baeyer-Villiger oxidas stcQ and the reductase stcR might be involved in the biosynthetic step from versicolorin A to demethylsterigmatocystin. The final step in the biosynthesis of sterigmatocystin is the methylation of demethylsterigmatocystin catalyzed by the methyltransferase stcP. The sequence is that of Fatty acid synthase alpha subunit stcJ from Emericella nidulans (strain FGSC A4 / ATCC 38163 / CBS 112.46 / NRRL 194 / M139) (Aspergillus nidulans).